The primary structure comprises 445 residues: Methionine aminopeptidase 2-3 (445 aa).

Residues 14 to 115 (ISDADANGAD…ENRYRTTSEE (102 aa)) form a disordered region. The span at 38–47 (EDDDSDDDVA) shows a compositional bias: acidic residues. Residues 60–75 (AKKKKNKKRKPKKKQP) are compositionally biased toward basic residues. Polar residues predominate over residues 85–95 (PLSQLFPNNTY). Residues 97 to 115 (KGEEVEYKDENRYRTTSEE) are compositionally biased toward basic and acidic residues. His198 provides a ligand contact to substrate. 3 residues coordinate a divalent metal cation: Asp218, Asp229, and His298. His306 is a binding site for substrate. A divalent metal cation contacts are provided by Glu331 and Glu426.

This sequence belongs to the peptidase M24A family. Methionine aminopeptidase eukaryotic type 2 subfamily. Co(2+) serves as cofactor. It depends on Zn(2+) as a cofactor. Requires Mn(2+) as cofactor. Fe(2+) is required as a cofactor.

It localises to the cytoplasm. The enzyme catalyses Release of N-terminal amino acids, preferentially methionine, from peptides and arylamides.. In terms of biological role, cotranslationally removes the N-terminal methionine from nascent proteins. The N-terminal methionine is often cleaved when the second residue in the primary sequence is small and uncharged (Met-Ala-, Cys, Gly, Pro, Ser, Thr, or Val). This is Methionine aminopeptidase 2-3 from Neosartorya fischeri (strain ATCC 1020 / DSM 3700 / CBS 544.65 / FGSC A1164 / JCM 1740 / NRRL 181 / WB 181) (Aspergillus fischerianus).